A 355-amino-acid chain; its full sequence is Guanine nucleotide-binding protein G(i) subunit alpha-2 (355 aa).

The N-myristoyl glycine moiety is linked to residue glycine 2. Cysteine 3 carries S-palmitoyl cysteine lipidation. Positions 32–355 (REVKLLLLGA…KNNLKDCGLF (324 aa)) constitute a G-alpha domain. The interval 35–48 (KLLLLGAGESGKST) is G1 motif. Residues 40-47 (GAGESGKS), 176-182 (LRTRVKT), 201-205 (DVGGQ), 270-273 (NKKD), and alanine 327 contribute to the GTP site. Positions 47 and 182 each coordinate Mg(2+). Residues 174–182 (DVLRTRVKT) are G2 motif. Residues 197 to 206 (FKMFDVGGQR) form a G3 motif region. Residues 266–273 (ILFLNKKD) are G4 motif. The interval 325-330 (TCATDT) is G5 motif.

Belongs to the G-alpha family. G(i/o/t/z) subfamily. In terms of assembly, g proteins are composed of 3 units; alpha, beta and gamma. The alpha chain contains the guanine nucleotide binding site. In this context, interacts with GNB2. Interacts with UNC5B. Interacts with GPSM1. Interacts with RGS12 and RGS14. Interacts (inactive GDP-bound form) with NUCB1 (via GBA motif); the interaction leads to activation of GNAI3. Interacts (inactive GDP-bound form) with CCDC88C/DAPLE (via GBA motif). Interacts (inactive GDP-bound form) with CCDC8A/GIV (via GBA motif).

It localises to the cytoplasm. The protein resides in the cell membrane. It is found in the cytoskeleton. Its subcellular location is the microtubule organizing center. The protein localises to the centrosome. It localises to the membrane. Its function is as follows. Guanine nucleotide-binding proteins (G proteins) are involved as modulators or transducers in various transmembrane signaling systems. The G(i) proteins are involved in hormonal regulation of adenylate cyclase: they inhibit the cyclase in response to beta-adrenergic stimuli. May play a role in cell division. This is Guanine nucleotide-binding protein G(i) subunit alpha-2 (Gnai2) from Rattus norvegicus (Rat).